The chain runs to 139 residues: MRSFEFFEHTADVGIRAYGKSLEEAFSNAALGVFEVITDTSKVKPIEYREIYLNGYDLENLLYKWIEELLYYYDSELMVFSKFDLMIDQDSMTLEGKAWGEKFNGKIHERRTVVKAMTYHQLSIEKTENCYVITFVVDI.

The Ca(2+) site is built by aspartate 12, aspartate 138, and isoleucine 139.

This sequence belongs to the archease family.

In terms of biological role, activates the tRNA-splicing ligase complex by facilitating the enzymatic turnover of catalytic subunit RtcB. Acts by promoting the guanylylation of RtcB, a key intermediate step in tRNA ligation. Can also alter the NTP specificity of RtcB such that ATP, dGTP or ITP is used efficiently. The sequence is that of Protein archease from Saccharolobus islandicus (strain L.S.2.15 / Lassen #1) (Sulfolobus islandicus).